The chain runs to 590 residues: Leucine-rich repeat transmembrane neuronal protein 4 (590 aa).

Positions 1–30 (MGFRLITQLKGMSVLLVLFPTLLLVMLTGA) are cleaved as a signal peptide. An LRRNT domain is found at 31–59 (QRACPKNCRCDGKIVYCESHAFADIPENI). The Extracellular portion of the chain corresponds to 31-424 (QRACPKNCRC…HEYEHVSFHK (394 aa)). N-linked (GlcNAc...) asparagine glycosylation occurs at Asn-58. LRR repeat units lie at residues 60-83 (SGGS…QFAG), 84-107 (LNQL…AFQG), 108-131 (IRRL…TFHP), 132-155 (VPNL…QFKG), 157-179 (RKLI…VFQD), 180-203 (CRNL…AFAG), 205-227 (LKLK…HFPR), 228-251 (LFNL…LTWT), 252-275 (WSSL…TFKC), and 276-299 (LPNL…TVNA). The N-linked (GlcNAc...) asparagine glycan is linked to Asn-126. Residue Asn-291 is glycosylated (N-linked (GlcNAc...) asparagine). The 52-residue stretch at 311-362 (NMWECSRSICPLFYWLKNFKGNKESTMICAGPKHIQGEKVSDAVETYNICSD) folds into the LRRCT domain. Residues 425 to 445 (IIAGSVALFLSVAMILLVIYV) traverse the membrane as a helical segment. Topologically, residues 446 to 590 (SWKRYPASMK…PAIYLERITN (145 aa)) are cytoplasmic.

The protein belongs to the LRRTM family. As to quaternary structure, peripherally associated with AMPAR complex. AMPAR complex consists of an inner core made of 4 pore-forming GluA/GRIA proteins (GRIA1, GRIA2, GRIA3 and GRIA4) and 4 major auxiliary subunits arranged in a twofold symmetry. One of the two pairs of distinct binding sites is occupied either by CNIH2, CNIH3 or CACNG2, CACNG3. The other harbors CACNG2, CACNG3, CACNG4, CACNG8 or GSG1L. This inner core of AMPAR complex is complemented by outer core constituents binding directly to the GluA/GRIA proteins at sites distinct from the interaction sites of the inner core constituents. Outer core constituents include at least PRRT1, PRRT2, CKAMP44/SHISA9, FRRS1L and NRN1. The proteins of the inner and outer core serve as a platform for other, more peripherally associated AMPAR constituents, including LRRTM4. Alone or in combination, these auxiliary subunits control the gating and pharmacology of the AMPAR complex and profoundly impact their biogenesis and protein processing. As to expression, expressed in the brain (at protein level).

It localises to the cell membrane. The protein resides in the postsynaptic cell membrane. In terms of biological role, may play a role in the development and maintenance of the nervous system. Exhibits strong synaptogenic activity, restricted to excitatory presynaptic differentiation. This Rattus norvegicus (Rat) protein is Leucine-rich repeat transmembrane neuronal protein 4 (Lrrtm4).